Consider the following 492-residue polypeptide: Glutamyl-tRNA(Gln) amidotransferase subunit A (492 aa).

Residues K78 and S158 each act as charge relay system in the active site. The active-site Acyl-ester intermediate is S182.

It belongs to the amidase family. GatA subfamily. As to quaternary structure, heterotrimer of A, B and C subunits.

The catalysed reaction is L-glutamyl-tRNA(Gln) + L-glutamine + ATP + H2O = L-glutaminyl-tRNA(Gln) + L-glutamate + ADP + phosphate + H(+). Functionally, allows the formation of correctly charged Gln-tRNA(Gln) through the transamidation of misacylated Glu-tRNA(Gln) in organisms which lack glutaminyl-tRNA synthetase. The reaction takes place in the presence of glutamine and ATP through an activated gamma-phospho-Glu-tRNA(Gln). The protein is Glutamyl-tRNA(Gln) amidotransferase subunit A of Parvibaculum lavamentivorans (strain DS-1 / DSM 13023 / NCIMB 13966).